The following is a 461-amino-acid chain: D-phenylhydantoinase (461 aa).

Positions 59, 61, and 151 each coordinate a divalent metal cation. N6-carboxylysine is present on lysine 151. Tyrosine 156 is a substrate binding site. Histidine 182 and histidine 239 together coordinate a divalent metal cation. Serine 286 contributes to the substrate binding site. Aspartate 313 contributes to the a divalent metal cation binding site. Asparagine 335 is a substrate binding site.

Belongs to the metallo-dependent hydrolases superfamily. Hydantoinase/dihydropyrimidinase family. In terms of assembly, homotetramer. It depends on a divalent metal cation as a cofactor. In terms of processing, carboxylation allows a single lysine to coordinate two divalent metal cations.

It carries out the reaction D-5-phenylhydantoin + H2O = N-carbamoyl-D-phenylglycine + H(+). Catalyzes the stereospecific hydrolysis of the cyclic amide bond of D-hydantoin derivatives with an aromatic side chains at the 5'-position. Has no activity on dihydropyrimidines. The physiological function is unknown. The protein is D-phenylhydantoinase of Escherichia coli O17:K52:H18 (strain UMN026 / ExPEC).